Here is a 487-residue protein sequence, read N- to C-terminus: MGSRLHVQQIKNGPPLPYKDDIRAFTRDYAASLDAQDPLSHFREEFIIPSVKDLKRKTLDPSEGEYSSMYLDARCIYLCGNSLGLQPRNTKKYINYYLRTWAIKGVTGHFTHHDDELLPPFVDVDSAGAKLMAPVVGALESEVAVMGSLTTNLHLLMASFYRPTTERYKIIIEGKAFPSDHYAVESQIKHHNLQPKDAMVLIEPQDPEHPILETDRILRVIDEHASTTALLLLSAIQYYTGQYFNIEKITAHAQSKGIVVGWDCAHAAGNVDLKLHDWNVDFAAWCNYKYLNSGPGGMAGIFVHEKHGEVKAGQGDGELELFRPRLSGWWGGDKATRFLMDNHFVPQSGAAGYQLSNPSVLDMNAVVASLELFNRTSMAEIRQKSLNLTGYLEHLLLASLDGVSDKPFSIITPPNPSERGAQLSLRLAPGLLDSVLETLEEYAVVIDERKPDVIRVAPAPLYNTYEEVWQFCQIFSEACRKALEKKD.

Residues Leu-149, Thr-150, 177–180 (FPSD), Ser-234, Asp-263, His-266, and Tyr-288 contribute to the pyridoxal 5'-phosphate site. At Lys-289 the chain carries N6-(pyridoxal phosphate)lysine. Positions 329 and 357 each coordinate pyridoxal 5'-phosphate.

The protein belongs to the kynureninase family. In terms of assembly, homodimer. Requires pyridoxal 5'-phosphate as cofactor.

It localises to the cytoplasm. It carries out the reaction L-kynurenine + H2O = anthranilate + L-alanine + H(+). The catalysed reaction is 3-hydroxy-L-kynurenine + H2O = 3-hydroxyanthranilate + L-alanine + H(+). The protein operates within amino-acid degradation; L-kynurenine degradation; L-alanine and anthranilate from L-kynurenine: step 1/1. It participates in cofactor biosynthesis; NAD(+) biosynthesis; quinolinate from L-kynurenine: step 2/3. Its function is as follows. Catalyzes the cleavage of L-kynurenine (L-Kyn) and L-3-hydroxykynurenine (L-3OHKyn) into anthranilic acid (AA) and 3-hydroxyanthranilic acid (3-OHAA), respectively. In Emericella nidulans (strain FGSC A4 / ATCC 38163 / CBS 112.46 / NRRL 194 / M139) (Aspergillus nidulans), this protein is Kynureninase 1 (bna5-1).